Reading from the N-terminus, the 52-residue chain is UPF0391 membrane protein ACIAD3602 (52 aa).

Transmembrane regions (helical) follow at residues 6-26 (IIFA…VAGL) and 30-50 (FAVI…ISRG).

Belongs to the UPF0391 family.

It is found in the cell membrane. In Acinetobacter baylyi (strain ATCC 33305 / BD413 / ADP1), this protein is UPF0391 membrane protein ACIAD3602.